The sequence spans 101 residues: MAKKALINRDLKRQALAKKYAAKRAAIKAVINDSNATEEERFEARLRFQSIPRNAAPVRQRRRCALTGRPRGTFRKFGLGRIKIREIAMRGEIPGVVKASW.

Belongs to the universal ribosomal protein uS14 family. As to quaternary structure, part of the 30S ribosomal subunit. Contacts proteins S3 and S10.

Binds 16S rRNA, required for the assembly of 30S particles and may also be responsible for determining the conformation of the 16S rRNA at the A site. This is Small ribosomal subunit protein uS14 from Neisseria gonorrhoeae (strain ATCC 700825 / FA 1090).